We begin with the raw amino-acid sequence, 181 residues long: Protein CRABS CLAW (181 aa).

The C4-type zinc-finger motif lies at C26–C53. The disordered stretch occupies residues G80 to Y122. The span at S87–Q99 shows a compositional bias: low complexity. Residues P100 to V109 are compositionally biased toward pro residues.

Belongs to the YABBY family. Restricted to flowers, mostly in carpels and nectaries. Expressed at low levels in sepal primordia (buds), sepal receptacle and developing petal. Not detected in placental tissues, septum, stigma and ovules.

It is found in the nucleus. Functionally, transcription factor required for the initiation of nectary development. Also involved in suppressing early radial growth of the gynoecium, in promoting its later elongation and in fusion of its carpels by regulating both cell division and expansion. Establishes the polar differentiation in the carpels by specifying abaxial cell fate in the ovary wall. Regulates both cell division and expansion. The sequence is that of Protein CRABS CLAW from Arabidopsis thaliana (Mouse-ear cress).